The following is a 332-amino-acid chain: MEYRVTDIITLLNAEYKGEVVEKVSKLSPFFHSDEKSLTFAADEKFLKNLSQTKAKVIIVPDIDLPLIEGKGYIVVKDSPRVIMPKLLHFFSRNLKKIEKMREDSAKIGENVDIAPNVYIGHDVVIGNNVKIFPNVTIGEGSIIGDGTVIYSNVSIREFVEIGKNCVIQPGAVIGSDGFGFVKVNGNNTKIDQIGTVIVEDEVEIGANTTIDRGAIGDTIIKKYTKIDNLVQIAHNDIIGENCLIISQVGIAGSTTIGNNVTLAGQVGVAGHLEIGDNTMIGAQSGVPGNVEANKILSGHPLVDHREDMKIRVAMKKLPELLKRVKALEEKK.

His235 serves as the catalytic Proton acceptor.

This sequence belongs to the transferase hexapeptide repeat family. LpxD subfamily. As to quaternary structure, homotrimer.

It carries out the reaction a UDP-3-O-[(3R)-3-hydroxyacyl]-alpha-D-glucosamine + a (3R)-hydroxyacyl-[ACP] = a UDP-2-N,3-O-bis[(3R)-3-hydroxyacyl]-alpha-D-glucosamine + holo-[ACP] + H(+). Its pathway is bacterial outer membrane biogenesis; LPS lipid A biosynthesis. Catalyzes the N-acylation of UDP-3-O-acylglucosamine using 3-hydroxyacyl-ACP as the acyl donor. Is involved in the biosynthesis of lipid A, a phosphorylated glycolipid that anchors the lipopolysaccharide to the outer membrane of the cell. The sequence is that of UDP-3-O-acylglucosamine N-acyltransferase from Fusobacterium nucleatum subsp. nucleatum (strain ATCC 25586 / DSM 15643 / BCRC 10681 / CIP 101130 / JCM 8532 / KCTC 2640 / LMG 13131 / VPI 4355).